A 392-amino-acid chain; its full sequence is Histidinol-phosphate aminotransferase (392 aa).

The disordered stretch occupies residues 1–24 (MSAVLKDPIPAPGRPESTRPEPRP). Residue K236 is modified to N6-(pyridoxal phosphate)lysine.

It belongs to the class-II pyridoxal-phosphate-dependent aminotransferase family. Histidinol-phosphate aminotransferase subfamily. Homodimer. Requires pyridoxal 5'-phosphate as cofactor.

The catalysed reaction is L-histidinol phosphate + 2-oxoglutarate = 3-(imidazol-4-yl)-2-oxopropyl phosphate + L-glutamate. It participates in amino-acid biosynthesis; L-histidine biosynthesis; L-histidine from 5-phospho-alpha-D-ribose 1-diphosphate: step 7/9. The polypeptide is Histidinol-phosphate aminotransferase (Xanthobacter autotrophicus (strain ATCC BAA-1158 / Py2)).